Reading from the N-terminus, the 208-residue chain is UPF0637 protein Bcer98_2662 (208 aa).

Belongs to the UPF0637 family.

This chain is UPF0637 protein Bcer98_2662, found in Bacillus cytotoxicus (strain DSM 22905 / CIP 110041 / 391-98 / NVH 391-98).